Reading from the N-terminus, the 349-residue chain is Interferon regulatory factor 2 (349 aa).

Positions 5–113 (RMRMRPWLEE…NAFRVYRMLP (109 aa)) form a DNA-binding region, IRF tryptophan pentad repeat. Residues lysine 75 and lysine 78 each carry the N6-acetyllysine modification. Residues 117–148 (RPSKKGKKPKTEKEDKVKHIKQEPVESSLGLS) are disordered. The segment covering 125 to 140 (PKTEKEDKVKHIKQEP) has biased composition (basic and acidic residues). Lysine 137 is covalently cross-linked (Glycyl lysine isopeptide (Lys-Gly) (interchain with G-Cter in SUMO); alternate). Lysine 137 participates in a covalent cross-link: Glycyl lysine isopeptide (Lys-Gly) (interchain with G-Cter in SUMO2); alternate. Lysine 166 participates in a covalent cross-link: Glycyl lysine isopeptide (Lys-Gly) (interchain with G-Cter in SUMO). A Phosphoserine modification is found at serine 225. The span at 228–239 (SSYAESETTDSV) shows a compositional bias: polar residues. The interval 228–251 (SSYAESETTDSVPSDEESAEGRPH) is disordered. Lysine 260 is covalently cross-linked (Glycyl lysine isopeptide (Lys-Gly) (interchain with G-Cter in SUMO2)). Lysine 293 participates in a covalent cross-link: Glycyl lysine isopeptide (Lys-Gly) (interchain with G-Cter in SUMO). Residues 297–349 (NPVPYNSSWPPFQDLPLSSSMTPASSSSRPDRETRASVIKKTSDITQARVKSC) form a disordered region. Positions 314–324 (SSSMTPASSSS) are enriched in low complexity.

The protein belongs to the IRF family. As to quaternary structure, interacts with BRD7, IRF2BP1 and IRF2BP2. Interacts with CREBBP in growing cells; the interaction acetylates IRF2 and regulates IRF2-dependent H4 promoter activity. Post-translationally, acetylated by CBP/ p300 during cell-growth. Acetylation on Lys-75 is required for stimulation of H4 promoter activity. The major sites of sumoylation are Lys-137 and Lys-293. Sumoylation with SUMO1 increases its transcriptional repressor activity on IRF1 and diminishes its ability to activate ISRE and H4 promoter. Expressed throughout the epithelium of the colon. Also expressed in lamina propria.

The protein localises to the nucleus. Specifically binds to the upstream regulatory region of type I IFN and IFN-inducible MHC class I genes (the interferon consensus sequence (ICS)) and represses those genes. Also acts as an activator for several genes including H4 and IL7. Constitutively binds to the ISRE promoter to activate IL7. Involved in cell cycle regulation through binding the site II (HiNF-M) promoter region of H4 and activating transcription during cell growth. Antagonizes IRF1 transcriptional activation. This chain is Interferon regulatory factor 2 (IRF2), found in Homo sapiens (Human).